A 173-amino-acid chain; its full sequence is Histone deacetylase complex subunit SAP30 homolog (173 aa).

Residues 21 to 69 (CCLLDDGDRCRNQAGNASYSKRIQKTVTQRRLKLSIDTAARHIYICDFH) form an Atypical zinc finger.

Belongs to the SAP30 family. In terms of assembly, component of the class 1 Sin3-histone deacetylase complex (HDAC).

It localises to the nucleus. Its function is as follows. Required for the function of the class 1 Sin3-histone deacetylase complex (HDAC). The polypeptide is Histone deacetylase complex subunit SAP30 homolog (Aedes aegypti (Yellowfever mosquito)).